Reading from the N-terminus, the 416-residue chain is Serine hydroxymethyltransferase (416 aa).

Residues leucine 121 and 125–127 (GHL) each bind (6S)-5,6,7,8-tetrahydrofolate. Lysine 230 carries the N6-(pyridoxal phosphate)lysine modification.

Belongs to the SHMT family. As to quaternary structure, homodimer. It depends on pyridoxal 5'-phosphate as a cofactor.

It is found in the cytoplasm. The enzyme catalyses (6R)-5,10-methylene-5,6,7,8-tetrahydrofolate + glycine + H2O = (6S)-5,6,7,8-tetrahydrofolate + L-serine. It functions in the pathway one-carbon metabolism; tetrahydrofolate interconversion. The protein operates within amino-acid biosynthesis; glycine biosynthesis; glycine from L-serine: step 1/1. Functionally, catalyzes the reversible interconversion of serine and glycine with tetrahydrofolate (THF) serving as the one-carbon carrier. This reaction serves as the major source of one-carbon groups required for the biosynthesis of purines, thymidylate, methionine, and other important biomolecules. Also exhibits THF-independent aldolase activity toward beta-hydroxyamino acids, producing glycine and aldehydes, via a retro-aldol mechanism. In Nitrosomonas europaea (strain ATCC 19718 / CIP 103999 / KCTC 2705 / NBRC 14298), this protein is Serine hydroxymethyltransferase.